The chain runs to 356 residues: Alanine racemase, catabolic (356 aa).

Lys-35 functions as the Proton acceptor; specific for D-alanine in the catalytic mechanism. Lys-35 is modified (N6-(pyridoxal phosphate)lysine). Residue Arg-130 participates in substrate binding. The active-site Proton acceptor; specific for L-alanine is Tyr-253. Residue Met-301 coordinates substrate.

The protein belongs to the alanine racemase family. It depends on pyridoxal 5'-phosphate as a cofactor.

It catalyses the reaction L-alanine = D-alanine. Functionally, isomerizes L-alanine to D-alanine which is then oxidized to pyruvate by DadA. In Escherichia coli (strain K12), this protein is Alanine racemase, catabolic (dadX).